A 226-amino-acid polypeptide reads, in one-letter code: Urease accessory protein UreF (226 aa).

The protein belongs to the UreF family. UreD, UreF and UreG form a complex that acts as a GTP-hydrolysis-dependent molecular chaperone, activating the urease apoprotein by helping to assemble the nickel containing metallocenter of UreC. The UreE protein probably delivers the nickel.

Its subcellular location is the cytoplasm. In terms of biological role, required for maturation of urease via the functional incorporation of the urease nickel metallocenter. The sequence is that of Urease accessory protein UreF from Nitrosospira multiformis (strain ATCC 25196 / NCIMB 11849 / C 71).